The following is a 139-amino-acid chain: Translation initiation factor 2 subunit beta (139 aa).

The protein belongs to the eIF-2-beta/eIF-5 family. As to quaternary structure, heterotrimer composed of an alpha, a beta and a gamma chain.

EIF-2 functions in the early steps of protein synthesis by forming a ternary complex with GTP and initiator tRNA. The sequence is that of Translation initiation factor 2 subunit beta from Sulfurisphaera tokodaii (strain DSM 16993 / JCM 10545 / NBRC 100140 / 7) (Sulfolobus tokodaii).